The following is a 667-amino-acid chain: Gamma-tubulin complex component 4 (667 aa).

Positions 425–445 (HKADATQAREGPSRETSPREA) are disordered.

Belongs to the TUBGCP family. As to quaternary structure, component of the gamma-tubulin ring complex (gTuRC) consisting of TUBGCP2, TUBGCP3, TUBGCP4, TUBGCP5 and TUBGCP6 and gamma-tubulin TUBG1 or TUBG2. TUBGCP2, TUBGCP3, TUBGCP4, TUBGCP5 and TUBGCP6 assemble in a 5:5:2:1:1 stoichiometry; each is associated with a gamma-tubulin, thereby arranging 14 gamma-tubulins in a helical manner. Gamma-tubulin at the first position is blocked by TUBGCP3 at the last position, allowing 13 protafilaments to grow into a microtubule. The gTuRC (via TUBGCP3 and TUBGCP6) interacts with ACTB and MZT1; the interactions form a luminal bridge that stabilizes the initial structure during complex assembly. The gTuRC (via TUBGCP2) interacts with MZT2A/MZT2B and CDK5RAP2 (via CM1 motif); the interactions play a role in gTuRC activation. Interacts with NINL. Interacts with ATF5; the ATF5:PCNT:polyglutamylated tubulin (PGT) tripartite unites the mother centriole and the pericentriolar material (PCM) in the centrosome. In terms of tissue distribution, ubiquitously expressed.

Its subcellular location is the cytoplasm. It localises to the cytoskeleton. The protein localises to the microtubule organizing center. The protein resides in the centrosome. Functionally, component of the gamma-tubulin ring complex (gTuRC) which mediates microtubule nucleation. The gTuRC regulates the minus-end nucleation of alpha-beta tubulin heterodimers that grow into microtubule protafilaments, a critical step in centrosome duplication and spindle formation. The polypeptide is Gamma-tubulin complex component 4 (TUBGCP4) (Homo sapiens (Human)).